Reading from the N-terminus, the 196-residue chain is Thymidine kinase (196 aa).

17–24 (GPMFAGKT) provides a ligand contact to ATP. E92 functions as the Proton acceptor in the catalytic mechanism. A substrate-binding site is contributed by F121. Zn(2+) contacts are provided by C146 and C149. 166-170 (LILAG) serves as a coordination point for substrate. Zn(2+)-binding residues include C179 and C182.

It belongs to the thymidine kinase family.

It catalyses the reaction thymidine + ATP = dTMP + ADP + H(+). In terms of biological role, phosphorylates thymidine. ASFV replicates in the cytoplasm of infected cells and contains genes encoding a number of enzymes needed for DNA synthesis, including thymidine kinase. Important for growth in swine macrophages in vitro and is a virus virulence factor in swine. This chain is Thymidine kinase, found in African swine fever virus (strain Badajoz 1971 Vero-adapted) (Ba71V).